A 344-amino-acid chain; its full sequence is Adenosine kinase (344 aa).

Residue Asp298 is part of the active site.

Belongs to the carbohydrate kinase PfkB family. The cofactor is Mg(2+).

The catalysed reaction is adenosine + ATP = AMP + ADP + H(+). It functions in the pathway purine metabolism; AMP biosynthesis via salvage pathway; AMP from adenosine: step 1/1. The protein is Adenosine kinase (ADK) of Schizophyllum commune (Split gill fungus).